We begin with the raw amino-acid sequence, 216 residues long: Somatotropin (216 aa).

The signal sequence occupies residues 1 to 26 (MATDSRTSWLLTVSLLCLLWPQEASA). Histidine 45 lines the Zn(2+) pocket. The cysteines at positions 78 and 189 are disulfide-linked. At serine 131 the chain carries Phosphoserine. Glutamate 198 serves as a coordination point for Zn(2+). The cysteines at positions 206 and 214 are disulfide-linked.

Belongs to the somatotropin/prolactin family.

It is found in the secreted. In terms of biological role, plays an important role in growth control. Its major role in stimulating body growth is to stimulate the liver and other tissues to secrete IGF1. It stimulates both the differentiation and proliferation of myoblasts. It also stimulates amino acid uptake and protein synthesis in muscle and other tissues. This is Somatotropin (Gh1) from Mus musculus (Mouse).